A 160-amino-acid chain; its full sequence is ATP synthase subunit delta, mitochondrial (160 aa).

A mitochondrion-targeting transit peptide spans 1 to 22 (MFRQSLRSIARTRTGTIGVRTY).

As to quaternary structure, F-type ATP synthases have 2 components, the catalytic core F(1) and the membrane-embedded component F(0), linked together by a central stalk and a peripheral stalk. The central stalk, also called rotor shaft, is often seen as part of F(1). The peripheral stalk is seen as part of F(0). F(0) contains the membrane channel next to the rotor. F-type ATP synthases form dimers but each monomer functions independently in ATP generation. The dimer consists of 18 different polypeptides: ATP1 (subunit alpha, part of F(1), 3 molecules per monomer), ATP2 (subunit beta, part of F(1), 3 molecules per monomer), ATP3 (subunit gamma, part of the central stalk), ATP4 (subunit b, part of the peripheral stalk), ATP5/OSCP (subunit 5/OSCP, part of the peripheral stalk), ATP6 (subunit a, part of the peripheral stalk), ATP7 (subunit d, part of the peripheral stalk), ATP8 (subunit 8, part of the peripheral stalk), OLI1 (subunit c, part of the rotor, 10 molecules per monomer), ATP14 (subunit h, part of the peripheral stalk), ATP15 (subunit epsilon, part of the central stalk), ATP16 (subunit delta, part of the central stalk), ATP17 (subunit f, part of the peripheral stalk), ATP18 (subunit i/j, part of the peripheral stalk). Dimer-specific subunits are ATP19 (subunit k, at interface between monomers), ATP20 (subunit g, at interface between monomers), TIM11 (subunit e, at interface between monomers). Also contains subunit L.

Its subcellular location is the mitochondrion inner membrane. Its function is as follows. Mitochondrial membrane ATP synthase (F(1)F(0) ATP synthase or Complex V) produces ATP from ADP in the presence of a proton gradient across the membrane which is generated by electron transport complexes of the respiratory chain. F-type ATP synthases consist of two structural domains, F(1) - containing the extramembraneous catalytic core, and F(0) - containing the membrane proton channel, linked together by a central stalk and a peripheral stalk. During catalysis, ATP synthesis in the catalytic domain of F(1) is coupled via a rotary mechanism of the central stalk subunits to proton translocation. Part of the complex F(1) domain and the central stalk which is part of the complex rotary element. Rotation of the central stalk against the surrounding alpha/ATP1(3)beta/ATP2(3) subunits leads to hydrolysis of ATP in three separate catalytic sites on the beta/ATP2 subunits. In Pichia angusta (Yeast), this protein is ATP synthase subunit delta, mitochondrial.